A 398-amino-acid chain; its full sequence is Metalloprotease MmpA (398 aa).

H22 is a Zn(2+) binding site. E23 is an active-site residue. H26 is a binding site for Zn(2+). 3 helical membrane-spanning segments follow: residues 117-139 (FIAV…VILV), 316-338 (QFWL…IPVL), and 362-381 (AAGF…FAAW). Residues 130 to 203 (AILVFAVILV…MPIDFAVERD (74 aa)) enclose the PDZ domain.

Belongs to the peptidase M50B family. The cofactor is Zn(2+).

The protein localises to the cell inner membrane. Involved in the regulated intramembrane proteolysis (RIP) of the short isoform of PodJ protein (PodJS), during the swarmer-to-stalked transition. The cleavage occurs near or within the single transmembrane of PodJS thereby releasing the N-terminal segment into the cytoplasm for subsequent degradation. It contributes to preserve asymmetry in the next cell cycle through sequential degradation. The protein is Metalloprotease MmpA (mmpA) of Caulobacter vibrioides (strain ATCC 19089 / CIP 103742 / CB 15) (Caulobacter crescentus).